A 168-amino-acid chain; its full sequence is Nicotinamide-nucleotide adenylyltransferase (168 aa).

This sequence belongs to the archaeal NMN adenylyltransferase family.

The protein resides in the cytoplasm. The enzyme catalyses beta-nicotinamide D-ribonucleotide + ATP + H(+) = diphosphate + NAD(+). It functions in the pathway cofactor biosynthesis; NAD(+) biosynthesis; NAD(+) from nicotinamide D-ribonucleotide: step 1/1. The chain is Nicotinamide-nucleotide adenylyltransferase from Methanocorpusculum labreanum (strain ATCC 43576 / DSM 4855 / Z).